The sequence spans 203 residues: Tic20 family protein Ycf60 (203 aa).

5 helical membrane passes run 2–22, 51–71, 84–104, 131–151, and 153–173; these read IRLF…RLAI, IIPY…YVLP, ILLP…VTFF, ILLF…PIEF, and ISFI…STIT.

This sequence belongs to the Tic20 family.

Its subcellular location is the plastid. The protein localises to the chloroplast membrane. This chain is Tic20 family protein Ycf60 (ycf60), found in Porphyra purpurea (Red seaweed).